A 255-amino-acid polypeptide reads, in one-letter code: Pyrroloquinoline-quinone synthase (255 aa).

It belongs to the PqqC family.

It carries out the reaction 6-(2-amino-2-carboxyethyl)-7,8-dioxo-1,2,3,4,7,8-hexahydroquinoline-2,4-dicarboxylate + 3 O2 = pyrroloquinoline quinone + 2 H2O2 + 2 H2O + H(+). The protein operates within cofactor biosynthesis; pyrroloquinoline quinone biosynthesis. Its function is as follows. Ring cyclization and eight-electron oxidation of 3a-(2-amino-2-carboxyethyl)-4,5-dioxo-4,5,6,7,8,9-hexahydroquinoline-7,9-dicarboxylic-acid to PQQ. The polypeptide is Pyrroloquinoline-quinone synthase (Acinetobacter baylyi (strain ATCC 33305 / BD413 / ADP1)).